A 219-amino-acid chain; its full sequence is MRIILLGPPGAGKGTQAQLICKRYDIPQISTGDMLRAAIREGTELGLKAKSVMESGGLVSDELIIGLVKERIAQPDCENGCIFDGFPRTIPQAEALENAGITIDHVIEIAVPDEEIVKRLSGRRQHPASGRVYHIEYNPPKVEGKDDVTGEELVQRPDDLEETIRKRLGSYHSETEQLVGFYQGRAASGENAPTYNKLDGLRTIDVVQKDLFAILDETK.

10–15 contacts ATP; the sequence is GAGKGT. Positions 30 to 59 are NMP; it reads STGDMLRAAIREGTELGLKAKSVMESGGLV. AMP-binding positions include threonine 31, arginine 36, 57–59, 85–88, and glutamine 92; these read GLV and GFPR. Residues 122–159 are LID; sequence GRRQHPASGRVYHIEYNPPKVEGKDDVTGEELVQRPDD. Residues arginine 123 and 132–133 contribute to the ATP site; that span reads VY. The AMP site is built by arginine 156 and arginine 167. Residue arginine 202 coordinates ATP.

It belongs to the adenylate kinase family. In terms of assembly, monomer.

It is found in the cytoplasm. The catalysed reaction is AMP + ATP = 2 ADP. It functions in the pathway purine metabolism; AMP biosynthesis via salvage pathway; AMP from ADP: step 1/1. Its function is as follows. Catalyzes the reversible transfer of the terminal phosphate group between ATP and AMP. Plays an important role in cellular energy homeostasis and in adenine nucleotide metabolism. This Acinetobacter baylyi (strain ATCC 33305 / BD413 / ADP1) protein is Adenylate kinase.